The following is a 227-amino-acid chain: Phosphoglycolate phosphatase (227 aa).

D13 serves as the catalytic Nucleophile. Mg(2+) is bound by residues D13, D15, and D176.

The protein belongs to the HAD-like hydrolase superfamily. CbbY/CbbZ/Gph/YieH family. The cofactor is Mg(2+).

It catalyses the reaction 2-phosphoglycolate + H2O = glycolate + phosphate. It functions in the pathway organic acid metabolism; glycolate biosynthesis; glycolate from 2-phosphoglycolate: step 1/1. In terms of biological role, specifically catalyzes the dephosphorylation of 2-phosphoglycolate. Is involved in the dissimilation of the intracellular 2-phosphoglycolate formed during the DNA repair of 3'-phosphoglycolate ends, a major class of DNA lesions induced by oxidative stress. This Nitrosospira multiformis (strain ATCC 25196 / NCIMB 11849 / C 71) protein is Phosphoglycolate phosphatase.